Reading from the N-terminus, the 445-residue chain is Methylenetetrahydrofolate--tRNA-(uracil-5-)-methyltransferase TrmFO (445 aa).

10–15 (GGGLAG) is a binding site for FAD.

It belongs to the MnmG family. TrmFO subfamily. The cofactor is FAD.

It localises to the cytoplasm. The enzyme catalyses uridine(54) in tRNA + (6R)-5,10-methylene-5,6,7,8-tetrahydrofolate + NADH + H(+) = 5-methyluridine(54) in tRNA + (6S)-5,6,7,8-tetrahydrofolate + NAD(+). It catalyses the reaction uridine(54) in tRNA + (6R)-5,10-methylene-5,6,7,8-tetrahydrofolate + NADPH + H(+) = 5-methyluridine(54) in tRNA + (6S)-5,6,7,8-tetrahydrofolate + NADP(+). Catalyzes the folate-dependent formation of 5-methyl-uridine at position 54 (M-5-U54) in all tRNAs. The protein is Methylenetetrahydrofolate--tRNA-(uracil-5-)-methyltransferase TrmFO of Microcystis aeruginosa (strain NIES-843 / IAM M-2473).